The sequence spans 468 residues: Mothers against decapentaplegic homolog 1 (468 aa).

N-acetylmethionine is present on Met-1. The MH1 domain maps to 12–136 (PAVKRLLGWK…YKRVESPVLP (125 aa)). Residues Cys-64, Cys-109, Cys-121, and His-126 each coordinate Zn(2+). Residues 162 to 246 (NEPHMPLNAT…DGSQPMDTNM (85 aa)) are disordered. Residues 188-210 (PNSSYPNSPGSSSSTYPHSPTSS) are compositionally biased toward low complexity. The segment covering 221-232 (DTPPPAYLPPED) has biased composition (pro residues). The segment covering 237–246 (DGSQPMDTNM) has biased composition (polar residues). Residues 274–468 (WCSIVYYELN…SPHNPISSVS (195 aa)) form the MH2 domain. The residue at position 325 (Thr-325) is a Phosphothreonine; by MINK1, TNIK and MAP4K4. The L3 loop stretch occupies residues 421–431 (KGWGAEYHRQD). Residues Ser-466 and Ser-468 each carry the phosphoserine modification.

It belongs to the dwarfin/SMAD family. As to quaternary structure, found in a complex with SMAD4 and YY1. Interacts with HGS, NANOG and ZCCHC12. Upon C-terminus phosphorylation: forms trimers with another SMAD1 and the co-SMAD SMAD4. Interacts with PEBP2-alpha subunit, CREB-binding protein (CBP), p300, SMURF1, SMURF2, USP15 and HOXC8. Associates with ZNF423 or ZNF521 in response to BMP2 leading to activate transcription of BMP target genes. Interacts with SKOR1. Interacts (via MH2 domain) with LEMD3. Binding to LEMD3 results in at least a partial reduction of receptor-mediated phosphorylation. Forms a ternary complex with PSMB4 and OAZ1 before PSMB4 is incorporated into the 20S proteasome. Interacts (via MH2 domain) with FAM83G (via MH2 domain); in a SMAD4-independent manner. Interacts with ZC3H3. Interacts with TMEM119. Interacts (via MH1 and MH2 domains) with ZNF8. Interacts with RANBP3L; the interaction increases when SMAD1 is not phosphorylated and mediates SMAD1 nuclear export. Interacts with EGR1; this interaction inhibits SMAD1 dephosphorylation. Interacts with SMAD6. Interacts with YAP1. Interacts with MTMR4; negatively regulates BMP signaling through SMAD1 dephosphorylation and retention in endosomes. In terms of processing, phosphorylation of the C-terminal SVS motif by BMP type 1 receptor kinase activates SMAD1 by promoting dissociation from the receptor and trimerization with SMAD4. Phosphorylation by ERK2 MAP kinase in response to EGF or HGF prevents SMAD1 nuclear accumulation and transcriptional activity in response to BMP. Dephosphorylation, probably by PPM1A, induces its export from the nucleus to the cytoplasm. Dephosphorylation is inhibited by association with EGR1. Phosphorylation by CDK8/9 creates binding sites for YAP1, and subsequent phosphorylation by GSK3 switches off YAP1 binding and adds binding sites for SMURF1. Post-translationally, ubiquitinated by SMAD-specific E3 ubiquitin ligase SMURF1, leading to its degradation. Monoubiquitinated, leading to prevent DNA-binding. Deubiquitination by USP15 alleviates inhibition and promotes activation of TGF-beta target genes. Dephosphorylation, probably by PPM1A, induces its export from the nucleus to the cytoplasm. Phospho-SMAD1 is ubiquitinated by CHIP leading to disruption of the SMAD1-SMAD4 complex. Ubiquitous; present in liver, lung, stomach and spleen with lower level in heart, testes and skeletal muscle.

It is found in the cytoplasm. It localises to the nucleus. In terms of biological role, transcriptional modulator that plays a role in various cellular processes, including embryonic development, cell differentiation, and tissue homeostasis. Upon BMP ligand binding to their receptors at the cell surface, is phosphorylated by activated type I BMP receptors (BMPRIs) and associates with SMAD4 to form an heteromeric complex which translocates into the nucleus acting as transcription factor. In turn, the hetero-trimeric complex recognizes cis-regulatory elements containing Smad Binding Elements (SBEs) to modulate the outcome of the signaling network. SMAD1/OAZ1/PSMB4 complex mediates the degradation of the CREBBP/EP300 repressor SNIP1. Positively regulates BMP4-induced expression of odontogenic development regulator MSX1 following IPO7-mediated nuclear import. This Rattus norvegicus (Rat) protein is Mothers against decapentaplegic homolog 1 (Smad1).